A 61-amino-acid polypeptide reads, in one-letter code: Beta-toxin Tce4 (61 aa).

Residues 1–61 (KEGYLMDHEG…KVWEYATNRC (61 aa)) enclose the LCN-type CS-alpha/beta domain. 4 disulfide bridges follow: C11–C61, C15–C37, C23–C42, and C27–C44. C61 bears the Cysteine amide mark.

The protein belongs to the long (4 C-C) scorpion toxin superfamily. Sodium channel inhibitor family. Beta subfamily. In terms of tissue distribution, expressed by the venom gland.

It localises to the secreted. Functionally, beta toxins bind voltage-independently at site-4 of sodium channels (Nav) and shift the voltage of activation toward more negative potentials thereby affecting sodium channel activation and promoting spontaneous and repetitive firing. In Tityus cerroazul (Scorpion), this protein is Beta-toxin Tce4.